Consider the following 924-residue polypeptide: Isoleucine--tRNA ligase (924 aa).

Residues 57–67 (PYANGDIHMGH) carry the 'HIGH' region motif. Glutamate 552 serves as a coordination point for L-isoleucyl-5'-AMP. The short motif at 593–597 (KMSKS) is the 'KMSKS' region element. Lysine 596 is a binding site for ATP. The Zn(2+) site is built by cysteine 891, cysteine 894, cysteine 911, and cysteine 914.

The protein belongs to the class-I aminoacyl-tRNA synthetase family. IleS type 1 subfamily. In terms of assembly, monomer. The cofactor is Zn(2+).

It localises to the cytoplasm. It catalyses the reaction tRNA(Ile) + L-isoleucine + ATP = L-isoleucyl-tRNA(Ile) + AMP + diphosphate. In terms of biological role, catalyzes the attachment of isoleucine to tRNA(Ile). As IleRS can inadvertently accommodate and process structurally similar amino acids such as valine, to avoid such errors it has two additional distinct tRNA(Ile)-dependent editing activities. One activity is designated as 'pretransfer' editing and involves the hydrolysis of activated Val-AMP. The other activity is designated 'posttransfer' editing and involves deacylation of mischarged Val-tRNA(Ile). This Geobacillus kaustophilus (strain HTA426) protein is Isoleucine--tRNA ligase.